Consider the following 689-residue polypeptide: Glycine--tRNA ligase beta subunit (689 aa).

The protein belongs to the class-II aminoacyl-tRNA synthetase family. As to quaternary structure, tetramer of two alpha and two beta subunits.

It localises to the cytoplasm. It catalyses the reaction tRNA(Gly) + glycine + ATP = glycyl-tRNA(Gly) + AMP + diphosphate. In Acinetobacter baumannii (strain ACICU), this protein is Glycine--tRNA ligase beta subunit.